A 201-amino-acid polypeptide reads, in one-letter code: Basic helix-loop-helix transcription factor scleraxis (201 aa).

2 disordered regions span residues 1–92 (MSFA…NSVN) and 148–177 (AFFH…QPKQ). A compositionally biased stretch (gly residues) spans 59-69 (RRAGGGGPGGR). Residues 70-88 (PGREPRQRHTANARERDRT) show a composition bias toward basic and acidic residues. Residues 75–127 (RQRHTANARERDRTNSVNTAFTALRTLIPTEPADRKLSKIETLRLASSYISHL) form the bHLH domain. A compositionally biased stretch (pro residues) spans 157–167 (SPPPPPPPPPA).

In terms of assembly, efficient DNA binding requires dimerization with another bHLH protein. Dimerizes and binds the E-box consensus sequence with E12.

The protein resides in the nucleus. Functionally, plays an early essential role in mesoderm formation, as well as a later role in formation of somite-derived chondrogenic lineages. This Homo sapiens (Human) protein is Basic helix-loop-helix transcription factor scleraxis (SCX).